The sequence spans 153 residues: 3-hydroxyacyl-[acyl-carrier-protein] dehydratase FabZ (153 aa).

His54 is a catalytic residue.

It belongs to the thioester dehydratase family. FabZ subfamily.

The protein localises to the cytoplasm. The catalysed reaction is a (3R)-hydroxyacyl-[ACP] = a (2E)-enoyl-[ACP] + H2O. Involved in unsaturated fatty acids biosynthesis. Catalyzes the dehydration of short chain beta-hydroxyacyl-ACPs and long chain saturated and unsaturated beta-hydroxyacyl-ACPs. The polypeptide is 3-hydroxyacyl-[acyl-carrier-protein] dehydratase FabZ (Shewanella denitrificans (strain OS217 / ATCC BAA-1090 / DSM 15013)).